The following is a 207-amino-acid chain: Outer-membrane lipoprotein LolB (207 aa).

Residues 1–21 form the signal peptide; it reads MPLPDFRFIRLLPLAALVLTA. A lipid anchor (N-palmitoyl cysteine) is attached at cysteine 22. The S-diacylglycerol cysteine moiety is linked to residue cysteine 22.

It belongs to the LolB family. Monomer.

Its subcellular location is the cell outer membrane. Functionally, plays a critical role in the incorporation of lipoproteins in the outer membrane after they are released by the LolA protein. This Escherichia coli O6:H1 (strain CFT073 / ATCC 700928 / UPEC) protein is Outer-membrane lipoprotein LolB.